The chain runs to 112 residues: UPF0482 protein Ent638_1930 (112 aa).

Positions 1–27 are cleaved as a signal peptide; the sequence is MTTLRKRLCLATLLSLTALAFTAPVSA.

Belongs to the UPF0482 family.

In Enterobacter sp. (strain 638), this protein is UPF0482 protein Ent638_1930.